Here is a 281-residue protein sequence, read N- to C-terminus: 2,3,4,5-tetrahydropyridine-2,6-dicarboxylate N-succinyltransferase (281 aa).

Residues Arg108 and Asp145 each coordinate substrate.

This sequence belongs to the transferase hexapeptide repeat family. Homotrimer.

The protein resides in the cytoplasm. It catalyses the reaction (S)-2,3,4,5-tetrahydrodipicolinate + succinyl-CoA + H2O = (S)-2-succinylamino-6-oxoheptanedioate + CoA. It functions in the pathway amino-acid biosynthesis; L-lysine biosynthesis via DAP pathway; LL-2,6-diaminopimelate from (S)-tetrahydrodipicolinate (succinylase route): step 1/3. This Rhodopseudomonas palustris (strain ATCC BAA-98 / CGA009) protein is 2,3,4,5-tetrahydropyridine-2,6-dicarboxylate N-succinyltransferase.